Here is a 144-residue protein sequence, read N- to C-terminus: 6-pyruvoyl tetrahydrobiopterin synthase (144 aa).

A propeptide spanning residues 1–4 (MNAA) is cleaved from the precursor. S18 is subject to Phosphoserine. Zn(2+) is bound at residue H23. S27 carries the phosphoserine modification. C42 (proton acceptor) is an active-site residue. Zn(2+) is bound by residues H48 and H50. H89 (charge relay system) is an active-site residue. Y127 is modified (phosphotyrosine). The active-site Charge relay system is the E133.

This sequence belongs to the PTPS family. In terms of assembly, homohexamer formed of two homotrimers in a head to head fashion. Zn(2+) is required as a cofactor. Phosphorylation of Ser-18 is required for maximal enzyme activity.

It catalyses the reaction 7,8-dihydroneopterin 3'-triphosphate = 6-pyruvoyl-5,6,7,8-tetrahydropterin + triphosphate + H(+). It functions in the pathway cofactor biosynthesis; tetrahydrobiopterin biosynthesis; tetrahydrobiopterin from 7,8-dihydroneopterin triphosphate: step 1/3. Its function is as follows. Involved in the biosynthesis of tetrahydrobiopterin, an essential cofactor of aromatic amino acid hydroxylases. Catalyzes the transformation of 7,8-dihydroneopterin triphosphate into 6-pyruvoyl tetrahydropterin. This Rattus norvegicus (Rat) protein is 6-pyruvoyl tetrahydrobiopterin synthase (Pts).